Reading from the N-terminus, the 399-residue chain is Probable peptidoglycan glycosyltransferase FtsW (399 aa).

Residues methionine 1–asparagine 32 lie on the Cytoplasmic side of the membrane. Residues valine 33–serine 53 form a helical membrane-spanning segment. The Periplasmic segment spans residues methionine 54 to alanine 72. Residues isoleucine 73–tryptophan 93 traverse the membrane as a helical segment. The Cytoplasmic portion of the chain corresponds to phenylalanine 94–threonine 97. A helical transmembrane segment spans residues phenylalanine 98 to valine 118. The Periplasmic segment spans residues asparagine 119–arginine 126. The helical transmembrane segment at leucine 127–alanine 147 threads the bilayer. The Cytoplasmic segment spans residues aspartate 148–threonine 159. Residues histidine 160 to alanine 180 traverse the membrane as a helical segment. Residues glutamate 181–aspartate 183 are Periplasmic-facing. The chain crosses the membrane as a helical span at residues leucine 184–proline 204. Topologically, residues proline 205–glutamine 207 are cytoplasmic. The chain crosses the membrane as a helical span at residues phenylalanine 208 to tyrosine 228. At arginine 229–glutamate 292 the chain is on the periplasmic side. Residues phenylalanine 293–isoleucine 313 form a helical membrane-spanning segment. At lysine 314–alanine 327 the chain is on the cytoplasmic side. The helical transmembrane segment at glycine 328–methionine 348 threads the bilayer. The Periplasmic portion of the chain corresponds to asparagine 349 to threonine 359. A helical membrane pass occupies residues leucine 360–isoleucine 380. Topologically, residues leucine 381–phenylalanine 399 are cytoplasmic.

The protein belongs to the SEDS family. FtsW subfamily.

Its subcellular location is the cell inner membrane. It catalyses the reaction [GlcNAc-(1-&gt;4)-Mur2Ac(oyl-L-Ala-gamma-D-Glu-L-Lys-D-Ala-D-Ala)](n)-di-trans,octa-cis-undecaprenyl diphosphate + beta-D-GlcNAc-(1-&gt;4)-Mur2Ac(oyl-L-Ala-gamma-D-Glu-L-Lys-D-Ala-D-Ala)-di-trans,octa-cis-undecaprenyl diphosphate = [GlcNAc-(1-&gt;4)-Mur2Ac(oyl-L-Ala-gamma-D-Glu-L-Lys-D-Ala-D-Ala)](n+1)-di-trans,octa-cis-undecaprenyl diphosphate + di-trans,octa-cis-undecaprenyl diphosphate + H(+). The protein operates within cell wall biogenesis; peptidoglycan biosynthesis. Functionally, peptidoglycan polymerase that is essential for cell division. The sequence is that of Probable peptidoglycan glycosyltransferase FtsW from Acinetobacter baylyi (strain ATCC 33305 / BD413 / ADP1).